Here is a 277-residue protein sequence, read N- to C-terminus: Type IV methyl-directed restriction enzyme EcoKMcrA (277 aa).

One can recognise an HNH domain in the interval 207–257; it reads CENCGKNAPFYLNDGNPYLEVHHVIPLSSGGADTTDNCVALCPNCHRELHY.

Functionally, restriction of 5-methyl and 5-hydroxymethylcytosines at the specific DNA sequence 5'-C(me)CGG-3'. In Escherichia coli (strain K12), this protein is Type IV methyl-directed restriction enzyme EcoKMcrA.